A 95-amino-acid chain; its full sequence is DNA-directed RNA polymerase subunit Rpo11 (95 aa).

This sequence belongs to the archaeal Rpo11/eukaryotic RPB11/RPC19 RNA polymerase subunit family. In terms of assembly, part of the RNA polymerase complex.

It is found in the cytoplasm. It carries out the reaction RNA(n) + a ribonucleoside 5'-triphosphate = RNA(n+1) + diphosphate. Its function is as follows. DNA-dependent RNA polymerase (RNAP) catalyzes the transcription of DNA into RNA using the four ribonucleoside triphosphates as substrates. This Thermococcus sibiricus (strain DSM 12597 / MM 739) protein is DNA-directed RNA polymerase subunit Rpo11.